The following is a 582-amino-acid chain: Histone deacetylase 9-B (582 aa).

The interaction with mef2 stretch occupies residues 146 to 195; it reads SNEVKQKLQEFLLSKSTKDITLNGIPQKITQSSKLWYTASHHTSLEQSSP. Polar residues predominate over residues 189-205; the sequence is SLEQSSPPLGGASSSCK. Disordered stretches follow at residues 189-254, 270-314, 409-447, and 496-567; these read SLEQ…KEGN, TASS…QSRL, LSSG…RTQS, and VHLQ…NQSS. 2 stretches are compositionally biased toward basic and acidic residues: residues 213-224 and 238-253; these read DYRDDFPLRKTV and KVAE…RKEG. Low complexity predominate over residues 270–289; sequence TASSSAPGSGPSSPNGACSA. Positions 295–314 are enriched in polar residues; it reads GPSSLPVTTRTERWPSQSRL.

It belongs to the histone deacetylase family. HD type 2 subfamily. As to quaternary structure, homodimer. Interacts with mef2.

It localises to the nucleus. It catalyses the reaction N(6)-acetyl-L-lysyl-[histone] + H2O = L-lysyl-[histone] + acetate. Devoided of intrinsic deacetylase activity, promotes the deacetylation of lysine residues on the N-terminal part of the core histones (H2A, H2B, H3 and H4) by recruiting other histone deacetylases. Histone deacetylation gives a tag for epigenetic repression and plays an important role in transcriptional regulation, cell cycle progression and developmental events. Represses MEF2-dependent transcription. In Danio rerio (Zebrafish), this protein is Histone deacetylase 9-B (hdac9b).